The following is a 266-amino-acid chain: Transmembrane domain-containing protein TMIGD3 (266 aa).

The segment at 1-20 is disordered; sequence MEGSPAGPIEQKEARWESSW. A helical transmembrane segment spans residues 55 to 75; that stretch reads FLPVMWLFILLSLALISDAMV. N-linked (GlcNAc...) asparagine glycosylation occurs at asparagine 192. The chain crosses the membrane as a helical span at residues 213 to 233; it reads ILIICILITGLGIISVISHLT.

Expressed in the lung and bone. Expressed at lower levels in osteosarcoma tissues (at protein level).

It localises to the membrane. Functionally, plays a suppressive role in osteosarcoma malignancy by inhibiting NF-kappa-B activity. This Homo sapiens (Human) protein is Transmembrane domain-containing protein TMIGD3.